The chain runs to 499 residues: CD-NTase-associated protein 4 (499 aa).

Residues 1–226 (MATSVLANWH…DFRFDGAARA (226 aa)) form an N-terminal endonuclease domain region. Catalysis depends on residues Asp-49 and Gln-72. Asp-49 contributes to the Mg(2+) binding site. Ile-73 is a Mg(2+) binding site. Lys-74 is a catalytic residue. The interval 258–464 (FRNVALRSFS…HIFSAAPNAV (207 aa)) is C-terminal SAVED domain.

This sequence belongs to the Cap4 nuclease family. As to quaternary structure, a monomer in the absence of ligand, in its presence it forms oligomers. Requires Mg(2+) as cofactor.

DNase activity is activated upon ligand binding (cAAG). Inhibited by EDTA. Effector DNase of a CBASS antivirus system. CBASS (cyclic oligonucleotide-based antiphage signaling system) provides immunity against bacteriophages. The CD-NTase protein (CdnD) synthesizes cyclic nucleotides in response to infection; these serve as specific second messenger signals. The signals activate a diverse range of effectors, leading to bacterial cell death and thus abortive phage infection. A type II-C(AAG) CBASS system. In terms of biological role, binds second messenger 3',3',3'-cyclic AMP-AMP-GMP (cAAG). In the presence of cAAG (synthesized by the cognate CD-NTase protein in the CBASS operon), endonucleolytically degrades dsDNA to approximately 17 bp length fragments, with a preference for 5'-C|NG sites. Only binds DNA in the presence of cAAG. Not activated by c-di-AMP, c-di-GMP, 3',3'-cyclic GMP-AMP (cGAMP) or the second messenger of A.baumanii strain ATCC 27244. Its function is as follows. Protects E.coli against phage T2 infection. When the cdnD-cap2-cap3-cap4 operon is introduced in E.coli there is a more than 10(3) decrease in the efficiency of T2 plaque formation. The operon does not protect against phage T5 and only about 10-fold against T7. Expression of cdnD-cap4 alone protects E.coli against phage T2 infection. This is CD-NTase-associated protein 4 from Enterobacter hormaechei subsp. hoffmannii (strain UCI 50).